The primary structure comprises 228 residues: Cytochrome b-c1 complex subunit Rieske, mitochondrial (228 aa).

The transit peptide at 1–26 directs the protein to the mitochondrion; it reads MLAKQFISKSLASSLRRLLPVSSTAS. Over 27–63 the chain is Mitochondrial matrix; sequence SLKGSMMTIPKFTSIRTYTDSPEMPDFSEYQTKSTGD. The chain crosses the membrane as a helical span at residues 64-93; the sequence is RSRVISYAMVGTMGALTAAGAQATVHDFLA. The Mitochondrial intermembrane portion of the chain corresponds to 94–228; sequence SWSASADVLA…TFEGSKIIIG (135 aa). In terms of domain architecture, Rieske spans 139–227; the sequence is IQEANSVDIS…YTFEGSKIII (89 aa). Cysteine 172, histidine 174, cysteine 191, and histidine 194 together coordinate [2Fe-2S] cluster. Cysteine 177 and cysteine 193 are oxidised to a cystine.

It belongs to the Rieske iron-sulfur protein family. In terms of assembly, component of the ubiquinol-cytochrome c oxidoreductase (cytochrome b-c1 complex, complex III, CIII), a multisubunit enzyme composed of 3 respiratory subunits cytochrome b, cytochrome c1 and Rieske protein, 2 core protein subunits, and additional low-molecular weight protein subunits. The complex exists as an obligatory dimer and forms supercomplexes (SCs) in the inner mitochondrial membrane with cytochrome c oxidase (complex IV, CIV). [2Fe-2S] cluster is required as a cofactor.

Its subcellular location is the mitochondrion inner membrane. The catalysed reaction is a quinol + 2 Fe(III)-[cytochrome c](out) = a quinone + 2 Fe(II)-[cytochrome c](out) + 2 H(+)(out). Functionally, component of the ubiquinol-cytochrome c oxidoreductase, a multisubunit transmembrane complex that is part of the mitochondrial electron transport chain which drives oxidative phosphorylation. The respiratory chain contains 3 multisubunit complexes succinate dehydrogenase (complex II, CII), ubiquinol-cytochrome c oxidoreductase (cytochrome b-c1 complex, complex III, CIII) and cytochrome c oxidase (complex IV, CIV), that cooperate to transfer electrons derived from NADH and succinate to molecular oxygen, creating an electrochemical gradient over the inner membrane that drives transmembrane transport and the ATP synthase. The cytochrome b-c1 complex catalyzes electron transfer from ubiquinol to cytochrome c, linking this redox reaction to translocation of protons across the mitochondrial inner membrane, with protons being carried across the membrane as hydrogens on the quinol. In the process called Q cycle, 2 protons are consumed from the matrix, 4 protons are released into the intermembrane space and 2 electrons are passed to cytochrome c. The Rieske protein is a catalytic core subunit containing a [2Fe-2S] iron-sulfur cluster. It cycles between 2 conformational states during catalysis to transfer electrons from the quinol bound in the Q(0) site in cytochrome b to cytochrome c1. The chain is Cytochrome b-c1 complex subunit Rieske, mitochondrial (rip1) from Schizosaccharomyces pombe (strain 972 / ATCC 24843) (Fission yeast).